The primary structure comprises 239 residues: tRNA (guanine-N(1)-)-methyltransferase (239 aa).

S-adenosyl-L-methionine contacts are provided by residues G108 and L127 to L132.

The protein belongs to the RNA methyltransferase TrmD family. As to quaternary structure, homodimer.

The protein resides in the cytoplasm. The catalysed reaction is guanosine(37) in tRNA + S-adenosyl-L-methionine = N(1)-methylguanosine(37) in tRNA + S-adenosyl-L-homocysteine + H(+). Its function is as follows. Specifically methylates guanosine-37 in various tRNAs. This is tRNA (guanine-N(1)-)-methyltransferase from Streptococcus pneumoniae (strain P1031).